The following is an 839-amino-acid chain: Toll-like receptor 4 (839 aa).

Residues 1 to 23 (MMSASRLAGTLIPAMAFLSCVRP) form the signal peptide. Over 24–631 (ESWEPCVEVV…SLNITCQMNK (608 aa)) the chain is Extracellular. A disulfide bridge links Cys29 with Cys40. An N-linked (GlcNAc...) asparagine glycan is attached at Asn35. LRR repeat units lie at residues 55–76 (STKN…SFFS), 79–100 (ELQV…AYQS), 103–124 (HLST…AFSG), 127–148 (SLQK…PIGH), and 151–172 (TLKE…EYFS). N-linked (GlcNAc...) asparagine glycosylation is present at Asn173. LRR repeat units follow at residues 176–199 (NLEH…RVLH), 205–225 (NLSL…AFKE), and 227–247 (RLHK…KTCI). An N-linked (GlcNAc...) asparagine glycan is attached at Asn205. The cysteines at positions 281 and 306 are disulfide-linked. N-linked (GlcNAc...) asparagine glycans are attached at residues Asn282 and Asn309. 10 LRR repeats span residues 331-351 (GWQH…LKLK), 352-373 (SLKR…VDLP), 374-394 (SLEF…CSQS), 400-422 (SLKY…LGLE), 423-444 (QLEH…SVFL), 448-456 (NLIYLDISH), 472-495 (SLEV…FTEL), 497-518 (NLTF…AFNS), 521-542 (SLQV…PYKC), and 545-565 (SLQV…QELQ). A disulfide bond links Cys390 and Cys391. Asn497 and Asn526 each carry an N-linked (GlcNAc...) asparagine glycan. The N-linked (GlcNAc...) asparagine glycan is linked to Asn575. The 51-residue stretch at 579 to 629 (NDFACTCEHQSFLQWIKDQRQLLVEVERMECATPSDKQGMPVLSLNITCQM) folds into the LRRCT domain. Disulfide bonds link Cys583/Cys609 and Cys585/Cys627. Asn624 and Asn630 each carry an N-linked (GlcNAc...) asparagine glycan. A helical transmembrane segment spans residues 632-652 (TIIGVSVLSVLVVSVVAVLVY). Over 653–839 (KFYFHLMLLA…GCNWQEATSI (187 aa)) the chain is Cytoplasmic. The TIR domain maps to 672 to 815 (NIYDAFVIYS…IFWRRLRKAL (144 aa)).

Belongs to the Toll-like receptor family. Belongs to the lipopolysaccharide (LPS) receptor, a multi-protein complex containing at least CD14, LY96 and TLR4. Binding to bacterial LPS leads to homodimerization. Interacts with LY96 via the extracellular domain. Interacts with MYD88 and TIRAP via their respective TIR domains. Interacts with NOX4. Interacts with CNPY3 and HSP90B1; this interaction is required for proper folding in the endoplasmic reticulum. Interacts with MAP3K21; this interaction leads to negative regulation of TLR4 signaling. Interacts with CD36, following CD36 stimulation by oxLDL or amyloid-beta 42, and forms a heterodimer with TLR6. The trimeric complex is internalized and triggers inflammatory response. LYN kinase activity facilitates TLR4-TLR6 heterodimerization and signal initiation. Interacts with TICAM1 in response to LPS in a WDFY1-dependent manner. Interacts with WDFY1 in response to LPS. Interacts with SMPDL3B. Interacts with CEACAM1; upon lipopolysaccharide stimulation, forms a complex including TLR4 and the phosphorylated form of SYK and CEACAM1, which in turn, recruits PTPN6 that dephosphorylates SYK, reducing the production of reactive oxygen species (ROS) and lysosome disruption, which in turn, reduces the activity of the inflammasome. Interacts with RFTN1; the interaction occurs in response to lipopolysaccharide stimulation. Interacts with SCIMP; the interaction occurs in response to lipopolysaccharide stimulation and is enhanced by phosphorylation of SCIMP by LYN. This interaction facilitates the phosphorylation of TLR4 by LYN which elicits a selective cytokine response in macrophages. Interacts with TRAF3IP3. Interacts with TREM1; this interaction enhances TLR4-mediated inflammatory response. Interacts with ZG16B/PAUF. Interacts with CD82; this interaction inhibits TLR4-mediated signaling pathway. In terms of processing, phosphorylated on tyrosine residues by LYN after binding lipopolysaccharide. Post-translationally, ubiquitinated by RNF128 via 'Lys-28'-linked polyubiquitin chains, leading to proteasomal degradation.

The protein resides in the cell membrane. The protein localises to the early endosome. It localises to the cell projection. It is found in the ruffle. Functionally, transmembrane receptor that functions as a pattern recognition receptor recognizing pathogen- and damage-associated molecular patterns (PAMPs and DAMPs) to induce innate immune responses via downstream signaling pathways. At the plasma membrane, cooperates with LY96 to mediate the innate immune response to bacterial lipopolysaccharide (LPS). Also involved in LPS-independent inflammatory responses triggered by free fatty acids, such as palmitate, and Ni(2+). Mechanistically, acts via MYD88, TIRAP and TRAF6, leading to NF-kappa-B activation, cytokine secretion and the inflammatory response. Alternatively, CD14-mediated TLR4 internalization via endocytosis is associated with the initiation of a MYD88-independent signaling via the TICAM1-TBK1-IRF3 axis leading to type I interferon production. In addition to the secretion of proinflammatory cytokines, initiates the activation of NLRP3 inflammasome and formation of a positive feedback loop between autophagy and NF-kappa-B signaling cascade. In complex with TLR6, promotes inflammation in monocytes/macrophages by associating with TLR6 and the receptor CD86. Upon ligand binding, such as oxLDL or amyloid-beta 42, the TLR4:TLR6 complex is internalized and triggers inflammatory response, leading to NF-kappa-B-dependent production of CXCL1, CXCL2 and CCL9 cytokines, via MYD88 signaling pathway, and CCL5 cytokine, via TICAM1 signaling pathway. In myeloid dendritic cells, vesicular stomatitis virus glycoprotein G but not LPS promotes the activation of IRF7, leading to type I IFN production in a CD14-dependent manner. This Pan paniscus (Pygmy chimpanzee) protein is Toll-like receptor 4 (TLR4).